A 182-amino-acid polypeptide reads, in one-letter code: Bifunctional protein PyrR (182 aa).

The PRPP-binding motif lies at 99–111; that stretch reads VVLVDDVLFTGRT.

The protein belongs to the purine/pyrimidine phosphoribosyltransferase family. PyrR subfamily.

The catalysed reaction is UMP + diphosphate = 5-phospho-alpha-D-ribose 1-diphosphate + uracil. Its function is as follows. Regulates the transcription of the pyrimidine nucleotide (pyr) operon in response to exogenous pyrimidines. In terms of biological role, also displays a weak uracil phosphoribosyltransferase activity which is not physiologically significant. The polypeptide is Bifunctional protein PyrR (Chloroflexus aurantiacus (strain ATCC 29366 / DSM 635 / J-10-fl)).